The chain runs to 536 residues: MSKKILYGKEARKALLQGVDAIANTVKVTLGPKGRNVILEKAYDSPAIVNDGVSIAKEIELKNPYQNMGAKLVYEVASKTNDKAGDGTTTATVLAQSMIHRGFDAIDAGANPVLVKEGIELAALTVAKKLLAKSKKVDAQEDIQNVAAVSSGSQEIGKIIAQAMQKVGKDGVINVDESKGFETELEVVEGLQYDKGYASPYFVSDRESMTVQLENALVLVTDHKISTVQEIVPILEEVVKASRPLLIVAEAVENEVLGVLVANKLRGTFNVVVTNAPGFGDNQKEMLQDIAVLTKANFVSKELNMKLADLKMDDLGNINKAIIKKDNTTLISNSKSPELEKRIQVLKTQIKNATSDYETKNLQERLAKLSGGVALIKVGAATDTELKDKKLRIEDALNATKAAITEGIVVGGGKALVEVYQELKDTLVSDNKEVQQGIDVVVQSLLVPTYQIAYNAGFSGKDVVKQQLLQPLNFGFNAKEGKYVCLLKEGIIDPTKVTRQAVLNAASISALMITTEAAVVSLKENKDNNFDLGTQE.

Residues 29–32, 86–90, Gly412, and Asp493 each bind ATP; these read TLGP and DGTTT.

It belongs to the chaperonin (HSP60) family. As to quaternary structure, forms a cylinder of 14 subunits composed of two heptameric rings stacked back-to-back. Interacts with the co-chaperonin GroES.

It localises to the cytoplasm. The catalysed reaction is ATP + H2O + a folded polypeptide = ADP + phosphate + an unfolded polypeptide.. In terms of biological role, together with its co-chaperonin GroES, plays an essential role in assisting protein folding. The GroEL-GroES system forms a nano-cage that allows encapsulation of the non-native substrate proteins and provides a physical environment optimized to promote and accelerate protein folding. The sequence is that of Chaperonin GroEL from Onion yellows phytoplasma (strain OY-M).